Reading from the N-terminus, the 177-residue chain is MSRIGKRPVTVPSGVTATVEGQTVKMKGPKGELRFVVHDDVEVKLEDGAVKVAPRYETKRAQALYGTARAQVANLVAGVTKGFEKKLEIIGVGYRAALQGKSLQLALGYSHDVNYAVPEGITIAVPKPTEITITGNDAQRVGQVAAEIRGYRPPEPYKGKGVKYADETIFRKEGKKK.

The protein belongs to the universal ribosomal protein uL6 family. In terms of assembly, part of the 50S ribosomal subunit.

Its function is as follows. This protein binds to the 23S rRNA, and is important in its secondary structure. It is located near the subunit interface in the base of the L7/L12 stalk, and near the tRNA binding site of the peptidyltransferase center. This is Large ribosomal subunit protein uL6 from Nitrobacter winogradskyi (strain ATCC 25391 / DSM 10237 / CIP 104748 / NCIMB 11846 / Nb-255).